Reading from the N-terminus, the 74-residue chain is MLEVLKRINTLAQKEREQGLTSEEQALRVDLRQEYLRTIREQFNKTLMGVTIYDPTGEDVTPEKLKEEQQKYFD.

A disordered region spans residues 53–74 (YDPTGEDVTPEKLKEEQQKYFD). The span at 61 to 74 (TPEKLKEEQQKYFD) shows a compositional bias: basic and acidic residues.

This sequence belongs to the UPF0291 family.

The protein localises to the cytoplasm. This is UPF0291 protein EF_0064 from Enterococcus faecalis (strain ATCC 700802 / V583).